A 630-amino-acid chain; its full sequence is tRNA uridine 5-carboxymethylaminomethyl modification enzyme MnmG (630 aa).

G13–G18 lines the FAD pocket. G273–F287 lines the NAD(+) pocket.

The protein belongs to the MnmG family. Homodimer. Heterotetramer of two MnmE and two MnmG subunits. The cofactor is FAD.

The protein resides in the cytoplasm. Its function is as follows. NAD-binding protein involved in the addition of a carboxymethylaminomethyl (cmnm) group at the wobble position (U34) of certain tRNAs, forming tRNA-cmnm(5)s(2)U34. This chain is tRNA uridine 5-carboxymethylaminomethyl modification enzyme MnmG, found in Actinobacillus pleuropneumoniae serotype 7 (strain AP76).